The chain runs to 721 residues: Protein mu-NS (721 aa).

The interval 1–13 is interaction with sigma-NS; sequence MASFKGFSVNTVP. The segment at 1-38 is RNA-binding; sequence MASFKGFSVNTVPVSKAKRDISSLAATPGIRSQPFTPS. The interval 14-40 is interaction with mu-2; the sequence is VSKAKRDISSLAATPGIRSQPFTPSVD. The interval 471–721 is involved in the formation of factory-like inclusions; the sequence is SSDMVDGIKL…IDFSVPTDEL (251 aa). Coiled-coil stretches lie at residues 523–560 and 628–686; these read LLSQ…SAQA and QMNG…NQRQ.

It belongs to the orthoreovirus mu-NS protein family. In terms of assembly, interacts with mu-2. Interacts with sigma-NS; in viral factories. Interacts with the inner capsid proteins lambda-1 and sigma-2, and outer capsid protein lambda-2; in viral factories. Post-translationally, the N-terminus is blocked.

Its subcellular location is the host cytoplasm. Functionally, non-structural protein implicated with protein sigma-NS in forming the matrix of viral factories, which are large inclusions in the host cytoplasm where replication intermediates are assembled and viral RNA replication takes place. Together with mu-2, recruits the other core proteins to these factories. The sequence is that of Protein mu-NS (M3) from Mammalia (T1L).